The primary structure comprises 217 residues: Translation initiation factor IF-3 (217 aa).

The segment at 170–217 (KKTEAMAEARQAQEARKADAKANPGKSQNAAETDDAEAEAPAEAPAEA) is disordered. Basic and acidic residues predominate over residues 172 to 189 (TEAMAEARQAQEARKADA).

It belongs to the IF-3 family. Monomer.

The protein localises to the cytoplasm. Functionally, IF-3 binds to the 30S ribosomal subunit and shifts the equilibrium between 70S ribosomes and their 50S and 30S subunits in favor of the free subunits, thus enhancing the availability of 30S subunits on which protein synthesis initiation begins. The protein is Translation initiation factor IF-3 of Streptomyces coelicolor (strain ATCC BAA-471 / A3(2) / M145).